The chain runs to 202 residues: Imidazoleglycerol-phosphate dehydratase (202 aa).

It belongs to the imidazoleglycerol-phosphate dehydratase family.

The protein localises to the cytoplasm. It carries out the reaction D-erythro-1-(imidazol-4-yl)glycerol 3-phosphate = 3-(imidazol-4-yl)-2-oxopropyl phosphate + H2O. It participates in amino-acid biosynthesis; L-histidine biosynthesis; L-histidine from 5-phospho-alpha-D-ribose 1-diphosphate: step 6/9. The sequence is that of Imidazoleglycerol-phosphate dehydratase from Rhizobium meliloti (strain 1021) (Ensifer meliloti).